A 363-amino-acid polypeptide reads, in one-letter code: Large ribosomal subunit protein uL4B (363 aa).

Residues 280 to 363 (PENIISNADV…EKFLSVLHEN (84 aa)) are C-terminal-extended nuclear localization signal.

It belongs to the universal ribosomal protein uL4 family. In terms of assembly, component of the large ribosomal subunit (LSU). Mature yeast ribosomes consist of a small (40S) and a large (60S) subunit. The 40S small subunit contains 1 molecule of ribosomal RNA (18S rRNA) and at least 33 different proteins. The large 60S subunit contains 3 rRNA molecules (25S, 5.8S and 5S rRNA) and at least 46 different proteins. uL4 is associated with the polypeptide exit tunnel. uL4 interacts with its chaperone ACL4 and the nuclear import receptor KAP104.

The protein localises to the cytoplasm. Functionally, component of the ribosome, a large ribonucleoprotein complex responsible for the synthesis of proteins in the cell. The small ribosomal subunit (SSU) binds messenger RNAs (mRNAs) and translates the encoded message by selecting cognate aminoacyl-transfer RNA (tRNA) molecules. The large subunit (LSU) contains the ribosomal catalytic site termed the peptidyl transferase center (PTC), which catalyzes the formation of peptide bonds, thereby polymerizing the amino acids delivered by tRNAs into a polypeptide chain. The nascent polypeptides leave the ribosome through a tunnel in the LSU and interact with protein factors that function in enzymatic processing, targeting, and the membrane insertion of nascent chains at the exit of the ribosomal tunnel. The chain is Large ribosomal subunit protein uL4B (rpl401) from Schizosaccharomyces pombe (strain 972 / ATCC 24843) (Fission yeast).